Here is a 364-residue protein sequence, read N- to C-terminus: NF-kappa-B inhibitor epsilon (364 aa).

The tract at residues 1-108 is disordered; the sequence is MSDARKGPDE…GSPLPPAGVL (108 aa). At serine 18 the chain carries Phosphoserine. The segment covering 36–48 has biased composition (low complexity); that stretch reads PGSGSSQSGCPQP. The segment covering 51 to 70 has biased composition (basic and acidic residues); sequence HAPETHKEPEKEDADGERAD. The segment covering 93-104 has biased composition (pro residues); sequence PSPPAPGSPLPP. ANK repeat units lie at residues 122–155, 157–186, 190–219, 233–262, 267–296, and 300–329; these read DGDTLLHLAVIHEAPSVLFCCLAFLPQEVLDIQN, LYQTALHLAVHLDQPDVVRALVLKGASRIL, HGDTALHVACRRQNLACACCLLEEQPEPGR, QGLACLHIATLQRNQPLIELLLQNGADIDV, SGKTALHLAVETQERSLVQFLLQAGARVDA, and NGCTPLHLAAGRGLNSISSTLCEAGADSLL.

Belongs to the NF-kappa-B inhibitor family. As to quaternary structure, interacts with RELA, REL, NFKB1 nuclear factor NF-kappa-B p50 subunit and NFKB2 nuclear factor NF-kappa-B p52 subunit. Interacts with HNRNPA2B1; the interaction may be mediated by the RRM2 domain of HNRNPA2B1, and HNRNPA2B1 may interact simultaneously with FAM76B and either NFKBIA or NFKBIE to form a complex. Serine phosphorylated; followed by proteasome-dependent degradation.

The protein resides in the cytoplasm. Functionally, sequesters NF-kappa-B transcription factor complexes in the cytoplasm, thereby inhibiting their activity. Sequestered complexes include NFKB1/p50-RELA/p65 and NFKB1/p50-REL/c-Rel complexes. Limits B-cell activation in response to pathogens, and also plays an important role in B-cell development. The polypeptide is NF-kappa-B inhibitor epsilon (Nfkbie) (Mus musculus (Mouse)).